The primary structure comprises 674 residues: UvrABC system protein C (674 aa).

The GIY-YIG domain occupies 16–95 (TNPGVYRFRD…IKEFKPRFNV (80 aa)). One can recognise a UVR domain in the interval 207 to 242 (KRFTNKLEKQMAAAVARLDYEQAARIRDDITALRKV).

This sequence belongs to the UvrC family. As to quaternary structure, interacts with UvrB in an incision complex.

The protein localises to the cytoplasm. The UvrABC repair system catalyzes the recognition and processing of DNA lesions. UvrC both incises the 5' and 3' sides of the lesion. The N-terminal half is responsible for the 3' incision and the C-terminal half is responsible for the 5' incision. The protein is UvrABC system protein C of Pseudarthrobacter chlorophenolicus (strain ATCC 700700 / DSM 12829 / CIP 107037 / JCM 12360 / KCTC 9906 / NCIMB 13794 / A6) (Arthrobacter chlorophenolicus).